Reading from the N-terminus, the 420-residue chain is MSTSLGSNTYNRQNWEDADFPILCQTCLGENPYIRMTKEKYGKECKICARPFTVFRWCPGVRMRFKKTEVCQTCSKLKNVCQTCLLDLEYGLPIQVRDAGLSLKDEMPKSDVNKEYYTQNMEREIANSDGTRPVGALGKATSTSDMLLKLARTTPYYKRNRPHICSFWVKGECKRGEECPYRHEKPTDPDDPLADQDIKDRYYGINDPVADKLLKRASTMPRLDPPDDKTITTLYVGGLGDTITESDLRNHFYQFGEIRTITVVQRQQCAFIQFATRQAAEVAAEKSFNKLIVNGRRLNVKWGRSQAARGKEKDKEGTTESGIKLEPVPGLPGALPPPPAAEEEASANYFNLPPSGPPAVVNIALPPPPGIAPPPPPGFGPHMFHAMGPPPPFMRAPGPIHYPSQDPQRMGAHAGKHSSP.

The C3H1-type zinc finger occupies 159–186; that stretch reads RNRPHICSFWVKGECKRGEECPYRHEKP. The region spanning 232–305 is the RRM domain; the sequence is TTLYVGGLGD…RRLNVKWGRS (74 aa). Disordered regions lie at residues 303–343 and 372–420; these read GRSQ…AAEE and APPP…HSSP. A compositionally biased stretch (basic and acidic residues) spans 309–318; it reads RGKEKDKEGT.

Belongs to the SLT11 family. In terms of assembly, component of the pre-catalytic and catalytic spliceosome complexes. Component of the postcatalytic spliceosome P complex.

Its subcellular location is the nucleus. The protein localises to the cytoplasm. Required for pre-mRNA splicing as component of the activated spliceosome. Involved in the first step of pre-mRNA splicing. Binds directly to the internal stem-loop (ISL) domain of the U6 snRNA and to the pre-mRNA intron near the 5' splice site during the activation and catalytic phases of the spliceosome cycle. This chain is Pre-mRNA-splicing factor RBM22 (RBM22), found in Gallus gallus (Chicken).